Consider the following 300-residue polypeptide: Cholesterol 25-hydroxylase-like protein (300 aa).

N-linked (GlcNAc...) asparagine glycosylation is present at Asn-9. 3 helical membrane passes run 54–73, 95–115, and 130–152; these read YTWVAVFTFIDVFLCNVPFF, LQGWNQLLWIYPMALVQLIWV, and MLSQLAIFFLAFDFTYFWFHYIN. One can recognise a Fatty acid hydroxylase domain in the interval 135–266; the sequence is AIFFLAFDFT…WFNYLDRLMG (132 aa). The Histidine box-1 signature appears at 148–152; that stretch reads FHYIN. Residues 163-167 carry the Histidine box-2 motif; that stretch reads HSVHH. A helical membrane pass occupies residues 192 to 212; that stretch reads ITTIPWIFPTHCLTYWIWFFI. The short motif at 242 to 248 is the Histidine box-3 element; the sequence is AHDMHHL.

It belongs to the sterol desaturase family. Fe cation is required as a cofactor.

The protein localises to the membrane. In terms of biological role, probable sterol desaturase. The sequence is that of Cholesterol 25-hydroxylase-like protein from Caenorhabditis elegans.